The primary structure comprises 154 residues: Large ribosomal subunit protein uL13 (154 aa).

The protein belongs to the universal ribosomal protein uL13 family. As to quaternary structure, part of the 50S ribosomal subunit.

Functionally, this protein is one of the early assembly proteins of the 50S ribosomal subunit, although it is not seen to bind rRNA by itself. It is important during the early stages of 50S assembly. The protein is Large ribosomal subunit protein uL13 of Rhodospirillum centenum (strain ATCC 51521 / SW).